Here is a 288-residue protein sequence, read N- to C-terminus: Pantothenate synthetase (288 aa).

Residue 30–37 (MGNLHAGH) coordinates ATP. The Proton donor role is filled by His37. Position 61 (Gln61) interacts with (R)-pantoate. Position 61 (Gln61) interacts with beta-alanine. 149–152 (GLKD) contacts ATP. Position 155 (Gln155) interacts with (R)-pantoate. ATP contacts are provided by residues Ile178 and 186–189 (LSSR).

The protein belongs to the pantothenate synthetase family. In terms of assembly, homodimer.

The protein localises to the cytoplasm. The catalysed reaction is (R)-pantoate + beta-alanine + ATP = (R)-pantothenate + AMP + diphosphate + H(+). The protein operates within cofactor biosynthesis; (R)-pantothenate biosynthesis; (R)-pantothenate from (R)-pantoate and beta-alanine: step 1/1. In terms of biological role, catalyzes the condensation of pantoate with beta-alanine in an ATP-dependent reaction via a pantoyl-adenylate intermediate. In Colwellia psychrerythraea (strain 34H / ATCC BAA-681) (Vibrio psychroerythus), this protein is Pantothenate synthetase.